A 662-amino-acid chain; its full sequence is High affinity sulfate transporter 2 (662 aa).

The interval 1-35 (MSQRVSDQAMAEVIAETRTNSSSRRHGGGDDTPSL) is disordered. 12 consecutive transmembrane segments (helical) span residues 103–123 (GDFI…LAYA), 128–148 (LDPW…AFMG), 153–173 (IAIG…SNEI), 182–202 (LRLA…LGVC), 205–225 (GFLI…GAAI), 264–284 (WETI…KYIA), 291–311 (FWVS…FVYI), 346–366 (AGVR…MAIG), 383–403 (MVAM…VTTG), 420–440 (VSNI…TPLF), 447–467 (VLAS…AMVL), and 481–501 (GAFF…AVAI). The STAS domain occupies 532 to 655 (QYPKAEQIPG…LTVADAVATY (124 aa)).

This sequence belongs to the SLC26A/SulP transporter (TC 2.A.53) family.

Its subcellular location is the membrane. In terms of biological role, high-affinity H(+)/sulfate cotransporter that mediates the uptake of sulfate by plant roots from low concentrations of sulfate in the soil solution. In Stylosanthes hamata (Caribbean stylo), this protein is High affinity sulfate transporter 2 (ST2).